A 2323-amino-acid polypeptide reads, in one-letter code: C2 domain-containing protein 3 (2323 aa).

6 disordered regions span residues 1 to 27 (MKQR…SPST), 193 to 215 (RELR…SCRG), 402 to 426 (WNGL…DLND), 444 to 509 (SDVG…HTPA), 537 to 556 (PDSP…PPKP), and 698 to 745 (KLSS…TKKT). The span at 200–209 (ESSNTQSMIP) shows a compositional bias: polar residues. The residue at position 453 (serine 453) is a Phosphoserine. A compositionally biased stretch (basic and acidic residues) spans 474–483 (KVVESKEQKQ). The C2 1 domain maps to 504–663 (PGHTPAMSLS…IQSELLSFSS (160 aa)). Positions 698-735 (KLSSSTQPAPVSAATSSDTILPETGQDTACTRNPQSSN) are enriched in polar residues. Serine 713 is subject to Phosphoserine. 4 consecutive C2 domains span residues 771 to 903 (SCNL…SRLL), 969 to 1131 (QPPV…YRED), 1155 to 1323 (SSGF…TGWY), and 1383 to 1517 (KEEE…TLTI). The span at 1550 to 1574 (EPARELDSMDCSSHSESEQHPRKSD) shows a compositional bias: basic and acidic residues. 2 disordered regions span residues 1550–1599 (EPAR…NSAA) and 1798–1824 (LAHT…AARH). The span at 1584–1599 (LQTSPTSTQVHGNSAA) shows a compositional bias: polar residues. Positions 1598–1726 (AAAQVCPAQE…SGFQFICGWY (129 aa)) constitute a C2 6 domain. Serine 1871 is modified (phosphoserine). Disordered stretches follow at residues 1891 to 1918 (FSSQ…GRQD), 1952 to 2013 (ALTS…GGML), 2074 to 2163 (SEVL…SVGW), 2182 to 2231 (SEAF…EVST), and 2261 to 2323 (SHSP…TEET). Over residues 1892–1904 (SSQSSPAVSQSQE) the composition is skewed to low complexity. Polar residues-rich tracts occupy residues 1952 to 1965 (ALTS…SRAV) and 2074 to 2083 (SEVLSPQPTE). The span at 2110 to 2125 (AVSPQPAQGSPSQSGV) shows a compositional bias: low complexity. Residues 2147–2158 (PSLTFSEAQEGS) are compositionally biased toward polar residues. The span at 2182-2197 (SEAFSSEFSDSSESFE) shows a compositional bias: low complexity. Over residues 2207 to 2216 (SKREDYKDSP) the composition is skewed to basic and acidic residues. Over residues 2222 to 2231 (QVPTGSEVST) the composition is skewed to polar residues.

Interacts with OFD1; OFD1 may act as a negative regulator of C2CD3. Associates with the BBSome complex. Interacts with IFT88, BBS4 and PCM1.

Its subcellular location is the cytoplasm. It localises to the cytoskeleton. The protein resides in the cilium basal body. The protein localises to the microtubule organizing center. It is found in the centrosome. Its subcellular location is the centriole. Its function is as follows. Component of the centrioles that acts as a positive regulator of centriole elongation. Promotes assembly of centriolar distal appendage, a structure at the distal end of the mother centriole that acts as an anchor of the cilium, and is required for recruitment of centriolar distal appendages proteins CEP83, SCLT1, CEP89, FBF1 and CEP164. Not required for centriolar satellite integrity or RAB8 activation. Required for primary cilium formation. Required for sonic hedgehog/SHH signaling and for proteolytic processing of GLI3. The sequence is that of C2 domain-containing protein 3 (C2cd3) from Mus musculus (Mouse).